Reading from the N-terminus, the 510-residue chain is 2,3-bisphosphoglycerate-independent phosphoglycerate mutase (510 aa).

Mn(2+) is bound by residues Asp-13 and Ser-63. The Phosphoserine intermediate role is filled by Ser-63. Substrate contacts are provided by residues His-124, 154–155 (RD), Arg-186, Arg-192, 262–265 (RADR), and Lys-334. Positions 401, 405, 442, 443, and 461 each coordinate Mn(2+).

This sequence belongs to the BPG-independent phosphoglycerate mutase family. As to quaternary structure, monomer. It depends on Mn(2+) as a cofactor.

It catalyses the reaction (2R)-2-phosphoglycerate = (2R)-3-phosphoglycerate. It participates in carbohydrate degradation; glycolysis; pyruvate from D-glyceraldehyde 3-phosphate: step 3/5. Catalyzes the interconversion of 2-phosphoglycerate and 3-phosphoglycerate. The protein is 2,3-bisphosphoglycerate-independent phosphoglycerate mutase of Vibrio parahaemolyticus serotype O3:K6 (strain RIMD 2210633).